A 155-amino-acid polypeptide reads, in one-letter code: MPNFIEGNLKADGKKFAIIVARFNSFISDKLLDGALDSLVRSGATDSDIDVVRVPGAYEIPLIAKKLAASLKYDAVICLGAVIRGATPHFDVVVNEVSKGSAQVSLETGVPVLFGVLTTETIEQAIERSGTKAGNKGSDVAIAAIEMANLVDALQ.

5-amino-6-(D-ribitylamino)uracil contacts are provided by residues Phe23, 57-59, and 81-83; these read AYE and AVI. Residue 86-87 participates in (2S)-2-hydroxy-3-oxobutyl phosphate binding; the sequence is AT. Catalysis depends on His89, which acts as the Proton donor. Residue Phe114 participates in 5-amino-6-(D-ribitylamino)uracil binding. Arg128 contacts (2S)-2-hydroxy-3-oxobutyl phosphate.

Belongs to the DMRL synthase family.

The enzyme catalyses (2S)-2-hydroxy-3-oxobutyl phosphate + 5-amino-6-(D-ribitylamino)uracil = 6,7-dimethyl-8-(1-D-ribityl)lumazine + phosphate + 2 H2O + H(+). It participates in cofactor biosynthesis; riboflavin biosynthesis; riboflavin from 2-hydroxy-3-oxobutyl phosphate and 5-amino-6-(D-ribitylamino)uracil: step 1/2. Catalyzes the formation of 6,7-dimethyl-8-ribityllumazine by condensation of 5-amino-6-(D-ribitylamino)uracil with 3,4-dihydroxy-2-butanone 4-phosphate. This is the penultimate step in the biosynthesis of riboflavin. The polypeptide is 6,7-dimethyl-8-ribityllumazine synthase (Desulfotalea psychrophila (strain LSv54 / DSM 12343)).